A 294-amino-acid polypeptide reads, in one-letter code: Acetylglutamate kinase (294 aa).

Residues 69–70 (GG), Arg-91, and Asn-190 contribute to the substrate site.

This sequence belongs to the acetylglutamate kinase family. ArgB subfamily.

It localises to the cytoplasm. The catalysed reaction is N-acetyl-L-glutamate + ATP = N-acetyl-L-glutamyl 5-phosphate + ADP. Its pathway is amino-acid biosynthesis; L-arginine biosynthesis; N(2)-acetyl-L-ornithine from L-glutamate: step 2/4. Catalyzes the ATP-dependent phosphorylation of N-acetyl-L-glutamate. This is Acetylglutamate kinase from Mycobacterium tuberculosis (strain CDC 1551 / Oshkosh).